Here is a 181-residue protein sequence, read N- to C-terminus: Probable toxin TacT (181 aa).

The protein belongs to the acetyltransferase family. In terms of assembly, forms a complex with cognate antitoxin TacA.

In terms of biological role, probable toxin component of a type II toxin-antitoxin (TA) system. Might acetylate tRNA and inhibit translation. Should be neutralized by cognate antitoxin TacA (y4aR). This Sinorhizobium fredii (strain NBRC 101917 / NGR234) protein is Probable toxin TacT.